Consider the following 421-residue polypeptide: Proton/sodium-glutamate symport protein (421 aa).

Residues methionine 1 to lysine 3 are Cytoplasmic-facing. The helical transmembrane segment at isoleucine 4–phenylalanine 24 threads the bilayer. Topologically, residues tyrosine 25–arginine 43 are extracellular. Residues leucine 44 to valine 64 traverse the membrane as a helical segment. Residues glycine 65 to threonine 77 are Cytoplasmic-facing. A helical membrane pass occupies residues isoleucine 78–isoleucine 98. The Extracellular segment spans residues phenylalanine 99 to lysine 148. A helical membrane pass occupies residues glycine 149–glycine 169. The Cytoplasmic segment spans residues glutamate 170–proline 198. A helical transmembrane segment spans residues phenylalanine 199–proline 219. Residues leucine 220 to lysine 222 lie on the Extracellular side of the membrane. A helical membrane pass occupies residues leucine 223–alanine 243. Residue lysine 244 is a topological domain, cytoplasmic. A helical membrane pass occupies residues leucine 245–tyrosine 265. The Extracellular segment spans residues serine 266 to serine 306. Residues threonine 307–isoleucine 327 traverse the membrane as a helical segment. The Cytoplasmic portion of the chain corresponds to serine 328–glutamine 330. 2 consecutive transmembrane segments (helical) span residues isoleucine 331 to serine 351 and phenylalanine 352 to isoleucine 372. Topologically, residues alanine 373–alanine 421 are cytoplasmic.

It belongs to the dicarboxylate/amino acid:cation symporter (DAACS) (TC 2.A.23) family. Homotrimer.

The protein localises to the cell membrane. Functionally, this carrier protein is part of the Na(+)-dependent, binding-protein-independent glutamate-aspartate transport system. The chain is Proton/sodium-glutamate symport protein (gltT) from Geobacillus stearothermophilus (Bacillus stearothermophilus).